The primary structure comprises 307 residues: Heparan sulfate glucosamine 3-O-sulfotransferase 1 (307 aa).

Residues 1 to 20 (MAALLLGAVLLVAQPQLVPS) form the signal peptide. A glycan (N-linked (GlcNAc...) asparagine) is linked at Asn48. Residues 64–68 (KGGTR), Arg147, and Ser155 contribute to the 3'-phosphoadenylyl sulfate site. 3 N-linked (GlcNAc...) asparagine glycosylation sites follow: Asn192, Asn242, and Asn249. Tyr255 is a binding site for 3'-phosphoadenylyl sulfate. Cys256 and Cys265 are joined by a disulfide. Position 270–274 (270–274 (KGRAH)) interacts with 3'-phosphoadenylyl sulfate.

It belongs to the sulfotransferase 1 family. Highly expressed in the brain and kidney and weakly expressed in the heart, lung and placenta.

The protein localises to the golgi apparatus lumen. The catalysed reaction is alpha-D-glucosaminyl-[heparan sulfate](n) + 3'-phosphoadenylyl sulfate = 3-sulfo-alpha-D-glucosaminyl-[heparan sulfate](n) + adenosine 3',5'-bisphosphate + H(+). Functionally, sulfotransferase that utilizes 3'-phospho-5'-adenylyl sulfate (PAPS) to catalyze the transfer of a sulfo group to position 3 of glucosamine residues in heparan. Catalyzes the rate limiting step in the biosynthesis of heparan sulfate (HSact). This modification is a crucial step in the biosynthesis of anticoagulant heparan sulfate as it completes the structure of the antithrombin pentasaccharide binding site. The polypeptide is Heparan sulfate glucosamine 3-O-sulfotransferase 1 (HS3ST1) (Homo sapiens (Human)).